A 125-amino-acid polypeptide reads, in one-letter code: Protein ApaG (125 aa).

The 125-residue stretch at 1-125 folds into the ApaG domain; the sequence is MNDTPRVCVQ…FRLAIATHIH (125 aa).

In Erwinia tasmaniensis (strain DSM 17950 / CFBP 7177 / CIP 109463 / NCPPB 4357 / Et1/99), this protein is Protein ApaG.